Here is a 315-residue protein sequence, read N- to C-terminus: 4-hydroxy-3-methylbut-2-enyl diphosphate reductase (315 aa).

Residue Cys-12 participates in [4Fe-4S] cluster binding. Residues His-41 and His-74 each contribute to the (2E)-4-hydroxy-3-methylbut-2-enyl diphosphate site. Dimethylallyl diphosphate contacts are provided by His-41 and His-74. His-41 and His-74 together coordinate isopentenyl diphosphate. [4Fe-4S] cluster is bound at residue Cys-96. His-124 contacts (2E)-4-hydroxy-3-methylbut-2-enyl diphosphate. His-124 contacts dimethylallyl diphosphate. His-124 serves as a coordination point for isopentenyl diphosphate. Residue Glu-126 is the Proton donor of the active site. Thr-168 is a binding site for (2E)-4-hydroxy-3-methylbut-2-enyl diphosphate. A [4Fe-4S] cluster-binding site is contributed by Cys-198. 4 residues coordinate (2E)-4-hydroxy-3-methylbut-2-enyl diphosphate: Ser-226, Ser-227, Asn-228, and Ser-270. The dimethylallyl diphosphate site is built by Ser-226, Ser-227, Asn-228, and Ser-270. Residues Ser-226, Ser-227, Asn-228, and Ser-270 each contribute to the isopentenyl diphosphate site.

Belongs to the IspH family. The cofactor is [4Fe-4S] cluster.

It catalyses the reaction isopentenyl diphosphate + 2 oxidized [2Fe-2S]-[ferredoxin] + H2O = (2E)-4-hydroxy-3-methylbut-2-enyl diphosphate + 2 reduced [2Fe-2S]-[ferredoxin] + 2 H(+). The catalysed reaction is dimethylallyl diphosphate + 2 oxidized [2Fe-2S]-[ferredoxin] + H2O = (2E)-4-hydroxy-3-methylbut-2-enyl diphosphate + 2 reduced [2Fe-2S]-[ferredoxin] + 2 H(+). The protein operates within isoprenoid biosynthesis; dimethylallyl diphosphate biosynthesis; dimethylallyl diphosphate from (2E)-4-hydroxy-3-methylbutenyl diphosphate: step 1/1. Its pathway is isoprenoid biosynthesis; isopentenyl diphosphate biosynthesis via DXP pathway; isopentenyl diphosphate from 1-deoxy-D-xylulose 5-phosphate: step 6/6. In terms of biological role, catalyzes the conversion of 1-hydroxy-2-methyl-2-(E)-butenyl 4-diphosphate (HMBPP) into a mixture of isopentenyl diphosphate (IPP) and dimethylallyl diphosphate (DMAPP). Acts in the terminal step of the DOXP/MEP pathway for isoprenoid precursor biosynthesis. The sequence is that of 4-hydroxy-3-methylbut-2-enyl diphosphate reductase from Azotobacter vinelandii (strain DJ / ATCC BAA-1303).